The primary structure comprises 109 residues: Aquaporin-2 (109 aa).

Over 1 to 6 (SIAFSK) the chain is Cytoplasmic. The chain crosses the membrane as a helical span at residues 7–27 (AVFSEFLATLLFVFFGLGSAL). The Extracellular segment spans residues 28–35 (NWPQALPS). A helical membrane pass occupies residues 36–54 (GLQIAMAFGLAIGTLVQTL). Over 55–59 (GHISG) the chain is Cytoplasmic. An intramembrane region (discontinuously helical) is located at residues 60–69 (AHINPAVTVA). Residues 63–65 (NPA) carry the NPA 1 motif. Over 70 to 80 (CLVGCHVSFLR) the chain is Cytoplasmic. Residues 81–102 (AIFYVAAQLLGAVAGAALLHEL) traverse the membrane as a helical segment. At 103–109 (TPPDIRG) the chain is on the extracellular side.

The protein belongs to the MIP/aquaporin (TC 1.A.8) family. Homotetramer. Post-translationally, serine phosphorylation is necessary and sufficient for expression at the apical membrane. Endocytosis is not phosphorylation-dependent. N-glycosylated.

It localises to the apical cell membrane. The protein localises to the basolateral cell membrane. It is found in the cell membrane. The protein resides in the cytoplasmic vesicle membrane. Its subcellular location is the golgi apparatus. It localises to the trans-Golgi network membrane. It catalyses the reaction H2O(in) = H2O(out). The enzyme catalyses glycerol(in) = glycerol(out). Its function is as follows. Forms a water-specific channel that provides the plasma membranes of renal collecting duct with high permeability to water, thereby permitting water to move in the direction of an osmotic gradient. Plays an essential role in renal water homeostasis. Could also be permeable to glycerol. The sequence is that of Aquaporin-2 from Orycteropus afer (Aardvark).